We begin with the raw amino-acid sequence, 276 residues long: MSIDIQWNLLDEQIAEKLRAKLDTKIAKLSLPRYIQDLHITSFDFGTSVPDVTIQDICDPDPRLYEETLYSDDSSSLDDEESDREEENMTELPPYGATENGVHKKDSTDVNMNHTQTSNQQSPQNIAESNIHKSVPNSAETPSFLRNSIGDVQIIAHVQYSGNMTMSMEACLAVNYPSKDFAMLPFTLQLSDIVLDGTLVVALIASHVHVCFVDTLEHNRGDVQSSIIKNIRVDSVVGEPNKQVLKNVAKVEKFVVQKICQIVEDEFVWPSYFTLY.

Residues 1 to 276 (MSIDIQWNLL…FVWPSYFTLY (276 aa)) form the SMP-LTD domain. Residues 68-104 (TLYSDDSSSLDDEESDREEENMTELPPYGATENGVHK) form a disordered region. Residues 75-89 (SSLDDEESDREEENM) show a composition bias toward acidic residues.

It belongs to the MDM12 family. Component of the ER-mitochondria encounter structure (ERMES) or MDM complex, composed of mmm1, mdm10, mdm12 and mdm34. A mmm1 homodimer associates with one molecule of mdm12 on each side in a pairwise head-to-tail manner, and the SMP-LTD domains of mmm1 and mdm12 generate a continuous hydrophobic tunnel for phospholipid trafficking.

It localises to the mitochondrion outer membrane. The protein resides in the endoplasmic reticulum membrane. Component of the ERMES/MDM complex, which serves as a molecular tether to connect the endoplasmic reticulum (ER) and mitochondria. Components of this complex are involved in the control of mitochondrial shape and protein biogenesis, and function in nonvesicular lipid trafficking between the ER and mitochondria. Mdm12 is required for the interaction of the ER-resident membrane protein mmm1 and the outer mitochondrial membrane-resident beta-barrel protein mdm10. The mdm12-mmm1 subcomplex functions in the major beta-barrel assembly pathway that is responsible for biogenesis of all mitochondrial outer membrane beta-barrel proteins, and acts in a late step after the SAM complex. The mdm10-mdm12-mmm1 subcomplex further acts in the TOM40-specific pathway after the action of the mdm12-mmm1 complex. Essential for establishing and maintaining the structure of mitochondria and maintenance of mtDNA nucleoids. The protein is Mitochondrial distribution and morphology protein 12 of Schizosaccharomyces japonicus (strain yFS275 / FY16936) (Fission yeast).